The sequence spans 147 residues: Prefoldin subunit alpha (147 aa).

It belongs to the prefoldin alpha subunit family. In terms of assembly, heterohexamer of two alpha and four beta subunits.

The protein localises to the cytoplasm. Functionally, molecular chaperone capable of stabilizing a range of proteins. Seems to fulfill an ATP-independent, HSP70-like function in archaeal de novo protein folding. The polypeptide is Prefoldin subunit alpha (Saccharolobus islandicus (strain M.16.27) (Sulfolobus islandicus)).